A 100-amino-acid chain; its full sequence is SAGA-associated factor 11 (100 aa).

An SGF11-type zinc finger spans residues 73-94; it reads FQCENCGRSIAGGRFAQHMTKC.

It belongs to the SGF11 family. Component of the 1.8 MDa SAGA transcription coactivator-HAT complex. SAGA is built of 5 distinct domains with specialized functions. Within the SAGA complex, SUS1, SGF11, SGF73 and UBP8 form an additional subcomplex of SAGA called the DUB module (deubiquitination module). Interacts directly with SGF73, SUS1 and UBP8.

It is found in the nucleus. Functions as a component of the transcription regulatory histone acetylation (HAT) complex SAGA. At the promoters, SAGA is required for recruitment of the basal transcription machinery. It influences RNA polymerase II transcriptional activity through different activities such as TBP interaction and promoter selectivity, interaction with transcription activators, and chromatin modification through histone acetylation and deubiquitination. SAGA acetylates nucleosomal histone H3 to some extent (to form H3K9ac, H3K14ac, H3K18ac and H3K23ac). SAGA interacts with DNA via upstream activating sequences (UASs). Involved in transcriptional regulation of a subset of SAGA-regulated genes. Within the SAGA complex, participates in a subcomplex, that specifically deubiquitinates histones H2B. The protein is SAGA-associated factor 11 of Debaryomyces hansenii (strain ATCC 36239 / CBS 767 / BCRC 21394 / JCM 1990 / NBRC 0083 / IGC 2968) (Yeast).